Here is a 138-residue protein sequence, read N- to C-terminus: Large ribosomal subunit protein bL17 (138 aa).

It belongs to the bacterial ribosomal protein bL17 family. Part of the 50S ribosomal subunit. Contacts protein L32.

This is Large ribosomal subunit protein bL17 from Methylorubrum extorquens (strain CM4 / NCIMB 13688) (Methylobacterium extorquens).